A 239-amino-acid chain; its full sequence is Uridylate kinase (239 aa).

12 to 15 is an ATP binding site; that stretch reads KLSG. The segment at 21 to 26 is involved in allosteric activation by GTP; it reads GEQGFG. Position 55 (Gly-55) interacts with UMP. Residues Gly-56 and Arg-60 each contribute to the ATP site. Residues Asp-75 and 136–143 each bind UMP; that span reads TGNPYFST. ATP is bound by residues Thr-163, Tyr-169, and Asp-172.

Belongs to the UMP kinase family. Homohexamer.

The protein resides in the cytoplasm. The catalysed reaction is UMP + ATP = UDP + ADP. The protein operates within pyrimidine metabolism; CTP biosynthesis via de novo pathway; UDP from UMP (UMPK route): step 1/1. With respect to regulation, allosterically activated by GTP. Inhibited by UTP. Catalyzes the reversible phosphorylation of UMP to UDP. This is Uridylate kinase from Koribacter versatilis (strain Ellin345).